The following is a 333-amino-acid chain: Photosystem II assembly lipoprotein Ycf48 (333 aa).

The N-terminal stretch at 1–23 (MTRFVSSAINLLLVLVLGVSLSG) is a signal peptide. Cys-24 carries the N-palmitoyl cysteine lipid modification. Cys-24 is lipidated: S-diacylglycerol cysteine.

This sequence belongs to the Ycf48 family. In terms of assembly, part of early PSII assembly complexes which includes D1 (psbA) and PsbI; not found in mature PSII. Binds to the lumenal side of PSII complexes. Interacts with YidC.

It localises to the cellular thylakoid membrane. In terms of biological role, a factor required for optimal assembly of photosystem II (PSII), acting in the early stages of PSII assembly. Also plays a role in replacement of photodamaged D1 (psbA). Assists YidC in synthesis of chlorophyll-binding proteins. This is Photosystem II assembly lipoprotein Ycf48 from Parasynechococcus marenigrum (strain WH8102).